A 918-amino-acid polypeptide reads, in one-letter code: GPI ethanolamine phosphate transferase 3 (918 aa).

Residues 16–36 (IGTWKYIQACIFFAIILISNF) form a helical membrane-spanning segment. N-linked (GlcNAc...) asparagine glycans are attached at residues N54, N71, N101, N197, and N399. The next 15 helical transmembrane spans lie at 429–449 (LFPM…LALL), 459–479 (MSAN…ILIL), 486–506 (SPFP…LNSF), 523–543 (FSIF…FTVW), 547–563 (LCHF…FCKC), 567–587 (MSPL…LQVI), 616–636 (TLIV…ILQL), 651–671 (LSIL…HHVF), 687–707 (SLAN…FFLL), 715–735 (INVI…LSFL), 738–758 (PLGH…IQLK), 762–782 (PSVG…SHFF), 813–833 (IFMF…IPLF), 853–873 (FSFI…AGFF), and 887–907 (FMLS…QCFG).

This sequence belongs to the PIGG/PIGN/PIGO family. PIGO subfamily. Post-translationally, glycosylated.

It is found in the endoplasmic reticulum membrane. It participates in glycolipid biosynthesis; glycosylphosphatidylinositol-anchor biosynthesis. Functionally, involved in glycosylphosphatidylinositol-anchor biosynthesis. Transfers ethanolamine phosphate to the GPI third mannose which links the GPI-anchor to the C-terminus of the proteins by an amide bond. Involved in cell wall biosynthesis. The polypeptide is GPI ethanolamine phosphate transferase 3 (gpi13) (Schizosaccharomyces pombe (strain 972 / ATCC 24843) (Fission yeast)).